We begin with the raw amino-acid sequence, 335 residues long: UPF0104 membrane protein PH1989 (335 aa).

8 helical membrane-spanning segments follow: residues 4-24 (YLLIIIGVTLVLILLWWAGIE), 34-54 (DIRFILLAILMYCISVLIWAV), 62-82 (GANINVSFVKVIEGVFIGIFL), 122-142 (ILDVIPVVVFMMLAFLYALTI), 148-168 (LIILGISAIILVIILLMTTVF), 231-251 (LYSFILWGADILKTYFIFLSL), 266-286 (ASIAVAMISVIPGGIGITEVV), and 304-324 (VTMLDRLISFWIPTLLGGILV).

Belongs to the UPF0104 family.

The protein localises to the cell membrane. This chain is UPF0104 membrane protein PH1989, found in Pyrococcus horikoshii (strain ATCC 700860 / DSM 12428 / JCM 9974 / NBRC 100139 / OT-3).